Consider the following 380-residue polypeptide: Cytochrome b (380 aa).

4 helical membrane passes run 33 to 53 (FGSL…FLAM), 77 to 98 (WLIR…YMHI), 113 to 133 (WNIG…GYVL), and 178 to 198 (FFAF…LHLL). Positions 83 and 97 each coordinate heme b. Heme b-binding residues include histidine 182 and histidine 196. Histidine 201 lines the a ubiquinone pocket. The next 4 membrane-spanning stretches (helical) occupy residues 226–246 (YKDL…ALFA), 288–308 (LGGV…PILH), 320–340 (LTQF…WIGG), and 347–367 (FIII…VLSP).

Belongs to the cytochrome b family. The cytochrome bc1 complex contains 3 respiratory subunits (MT-CYB, CYC1 and UQCRFS1), 2 core proteins (UQCRC1 and UQCRC2) and probably 6 low-molecular weight proteins. The cofactor is heme b.

The protein resides in the mitochondrion inner membrane. In terms of biological role, component of the ubiquinol-cytochrome c reductase complex (complex III or cytochrome b-c1 complex) that is part of the mitochondrial respiratory chain. The b-c1 complex mediates electron transfer from ubiquinol to cytochrome c. Contributes to the generation of a proton gradient across the mitochondrial membrane that is then used for ATP synthesis. In Oncorhynchus keta (Chum salmon), this protein is Cytochrome b (mt-cyb).